The sequence spans 71 residues: Bacteriocin carnobacteriocin-A (71 aa).

A propeptide spanning residues 1–18 (MNNVKELSIKEMQQVTGG) is cleaved from the precursor. C40 and C69 are disulfide-bonded.

It is found in the secreted. Has antibacterial activity. The protein is Bacteriocin carnobacteriocin-A (cbnBA) of Carnobacterium maltaromaticum (Carnobacterium piscicola).